We begin with the raw amino-acid sequence, 113 residues long: Small ribosomal subunit protein bS6 (113 aa).

This sequence belongs to the bacterial ribosomal protein bS6 family.

Binds together with bS18 to 16S ribosomal RNA. This Buchnera aphidicola subsp. Acyrthosiphon pisum (strain APS) (Acyrthosiphon pisum symbiotic bacterium) protein is Small ribosomal subunit protein bS6 (rpsF).